Here is a 54-residue protein sequence, read N- to C-terminus: uncharacterized protein (54 aa).

The first 13 residues, 1–13 (MLLCFHMCQRIMW), serve as a signal peptide directing secretion.

Its subcellular location is the secreted. This is an uncharacterized protein from Saccharomyces cerevisiae (strain ATCC 204508 / S288c) (Baker's yeast).